Reading from the N-terminus, the 339-residue chain is GTP 3',8-cyclase (339 aa).

A Radical SAM core domain is found at 20–241 (NFDRKFEYLR…WTQKQSLSHD (222 aa)). A GTP-binding site is contributed by Arg-29. [4Fe-4S] cluster is bound by residues Cys-36 and Cys-40. Tyr-42 contributes to the S-adenosyl-L-methionine binding site. Residue Cys-43 coordinates [4Fe-4S] cluster. Residue Arg-78 participates in GTP binding. S-adenosyl-L-methionine is bound at residue Gly-82. Thr-109 serves as a coordination point for GTP. Ser-133 is a binding site for S-adenosyl-L-methionine. A GTP-binding site is contributed by Lys-170. Residue Met-204 coordinates S-adenosyl-L-methionine. Residues Cys-267 and Cys-270 each coordinate [4Fe-4S] cluster. GTP is bound at residue 272–274 (RLR). Cys-284 contributes to the [4Fe-4S] cluster binding site.

This sequence belongs to the radical SAM superfamily. MoaA family. In terms of assembly, monomer and homodimer. It depends on [4Fe-4S] cluster as a cofactor.

It carries out the reaction GTP + AH2 + S-adenosyl-L-methionine = (8S)-3',8-cyclo-7,8-dihydroguanosine 5'-triphosphate + 5'-deoxyadenosine + L-methionine + A + H(+). It functions in the pathway cofactor biosynthesis; molybdopterin biosynthesis. In terms of biological role, catalyzes the cyclization of GTP to (8S)-3',8-cyclo-7,8-dihydroguanosine 5'-triphosphate. This is GTP 3',8-cyclase from Psychromonas ingrahamii (strain DSM 17664 / CCUG 51855 / 37).